A 231-amino-acid polypeptide reads, in one-letter code: Ribose-5-phosphate isomerase A (231 aa).

Substrate-binding positions include T28–T31, D83–D86, and K96–G99. E105 (proton acceptor) is an active-site residue. K123 serves as a coordination point for substrate.

This sequence belongs to the ribose 5-phosphate isomerase family. In terms of assembly, homodimer.

The catalysed reaction is aldehydo-D-ribose 5-phosphate = D-ribulose 5-phosphate. It participates in carbohydrate degradation; pentose phosphate pathway; D-ribose 5-phosphate from D-ribulose 5-phosphate (non-oxidative stage): step 1/1. In terms of biological role, catalyzes the reversible conversion of ribose-5-phosphate to ribulose 5-phosphate. In Agrobacterium fabrum (strain C58 / ATCC 33970) (Agrobacterium tumefaciens (strain C58)), this protein is Ribose-5-phosphate isomerase A.